The primary structure comprises 154 residues: Iron sulfur cluster assembly protein 1, mitochondrial (154 aa).

The protein belongs to the NifU family. Component of the core Fe-S cluster (ISC) assembly machinery. [2Fe-2S] cluster serves as cofactor.

It localises to the mitochondrion matrix. Its pathway is cofactor biosynthesis; iron-sulfur cluster biosynthesis. Scaffold protein for the de novo synthesis of iron-sulfur (Fe-S) clusters within mitochondria, which is required for maturation of both mitochondrial and cytoplasmic [2Fe-2S] and [4Fe-4S] proteins. First, a [2Fe-2S] cluster is transiently assembled on the scaffold protein ISU1. In a second step, the cluster is released from ISU1, transferred to a glutaredoxin, followed by the formation of mitochondrial [2Fe-2S] proteins, the synthesis of [4Fe-4S] clusters and their target-specific insertion into the recipient apoproteins. Cluster assembly on ISU1 depends on the function of the cysteine desulfurase complex NFS1-ISD11, which serves as the sulfur donor for cluster synthesis, the iron-binding protein frataxin as the putative iron donor, and the electron transfer chain comprised of ferredoxin reductase and ferredoxin, which receive their electrons from NADH. The sequence is that of Iron sulfur cluster assembly protein 1, mitochondrial (ISU1) from Eremothecium gossypii (strain ATCC 10895 / CBS 109.51 / FGSC 9923 / NRRL Y-1056) (Yeast).